A 697-amino-acid chain; its full sequence is Long-chain-fatty-acid--CoA ligase 6 (697 aa).

The chain crosses the membrane as a helical; Signal-anchor for type III membrane protein span at residues 25–45 (LSATTLVSMGALAAILAYWFT). Residues 46–697 (HRPKALQPPC…QIEELYSISM (652 aa)) lie on the Cytoplasmic side of the membrane.

The protein belongs to the ATP-dependent AMP-binding enzyme family. Mg(2+) is required as a cofactor. As to expression, expressed predominantly in erythrocyte precursors, in particular in reticulocytes, fetal blood cells derived from fetal liver, hemopoietic stem cells from cord blood, bone marrow and brain.

The protein localises to the mitochondrion outer membrane. The protein resides in the peroxisome membrane. It is found in the microsome membrane. Its subcellular location is the endoplasmic reticulum membrane. The catalysed reaction is a long-chain fatty acid + ATP + CoA = a long-chain fatty acyl-CoA + AMP + diphosphate. It catalyses the reaction (5Z,8Z,11Z,14Z)-eicosatetraenoate + ATP + CoA = (5Z,8Z,11Z,14Z)-eicosatetraenoyl-CoA + AMP + diphosphate. The enzyme catalyses hexadecanoate + ATP + CoA = hexadecanoyl-CoA + AMP + diphosphate. It carries out the reaction (E)-hexadec-2-enoate + ATP + CoA = (2E)-hexadecenoyl-CoA + AMP + diphosphate. The catalysed reaction is 15-hydroxy-(5Z,8Z,11Z,13E)-eicosatetraenoate + ATP + CoA = 15-hydroxy-(5Z,8Z,11Z,13E)-eicosatetraenoyl-CoA + AMP + diphosphate. It catalyses the reaction 12-hydroxy-(5Z,8Z,10E,14Z)-eicosatetraenoate + ATP + CoA = 12-hydroxy-(5Z,8Z,10E,14Z)-eicosatetraenoyl-CoA + AMP + diphosphate. The enzyme catalyses 5-hydroxy-(6E,8Z,11Z,14Z)-eicosatetraenoate + ATP + CoA = 5-hydroxy-(6E,8Z,11Z,14Z)-eicosatetraenoyl-CoA + AMP + diphosphate. Catalyzes the conversion of long-chain fatty acids to their active form acyl-CoA for both synthesis of cellular lipids, and degradation via beta-oxidation. Plays an important role in fatty acid metabolism in brain and the acyl-CoAs produced may be utilized exclusively for the synthesis of the brain lipid. The sequence is that of Long-chain-fatty-acid--CoA ligase 6 from Homo sapiens (Human).